Consider the following 524-residue polypeptide: Peptide chain release factor 3 (524 aa).

In terms of domain architecture, tr-type G spans 11–278 (AKRRTFAIIS…SFVQYAPEPG (268 aa)). GTP-binding positions include 20–27 (SHPDAGKT), 88–92 (DTPGH), and 142–145 (NKLD).

Belongs to the TRAFAC class translation factor GTPase superfamily. Classic translation factor GTPase family. PrfC subfamily.

The protein localises to the cytoplasm. Its function is as follows. Increases the formation of ribosomal termination complexes and stimulates activities of RF-1 and RF-2. It binds guanine nucleotides and has strong preference for UGA stop codons. It may interact directly with the ribosome. The stimulation of RF-1 and RF-2 is significantly reduced by GTP and GDP, but not by GMP. The polypeptide is Peptide chain release factor 3 (Lacticaseibacillus casei (strain BL23) (Lactobacillus casei)).